A 302-amino-acid chain; its full sequence is 2-phosphoglycerate kinase (302 aa).

In terms of domain architecture, ATP-cone spans 2-89 (IKVIERDGKV…FWRRFRKLKI (88 aa)).

The protein belongs to the 2-phosphoglycerate kinase family. It depends on a divalent metal cation as a cofactor.

It catalyses the reaction (2R)-2-phosphoglycerate + ATP = (2R)-2,3-bisphosphoglycerate + ADP + H(+). It functions in the pathway thermoadapter biosynthesis; cyclic 2,3-diphosphoglycerate biosynthesis; cyclic 2,3-diphosphoglycerate from 2-phospho-D-glycerate: step 1/2. Functionally, catalyzes the phosphorylation of 2-phosphoglycerate to 2,3-diphosphoglycerate. Involved in the biosynthesis of cyclic 2,3-bisphosphoglycerate, a thermoprotectant. In Pyrococcus furiosus (strain ATCC 43587 / DSM 3638 / JCM 8422 / Vc1), this protein is 2-phosphoglycerate kinase.